A 177-amino-acid chain; its full sequence is Plasmid transfer protein TraF (177 aa).

The signal sequence occupies residues Met-1–Ala-30.

Belongs to the peptidase S26C family.

It localises to the periplasm. Its function is as follows. Required for donor-specific phage sensitivity. May be involved in pilus assembly. In Escherichia coli, this protein is Plasmid transfer protein TraF (traF).